Reading from the N-terminus, the 361-residue chain is Histidinol-phosphate aminotransferase (361 aa).

Lys-221 bears the N6-(pyridoxal phosphate)lysine mark.

Belongs to the class-II pyridoxal-phosphate-dependent aminotransferase family. Histidinol-phosphate aminotransferase subfamily. Homodimer. Requires pyridoxal 5'-phosphate as cofactor.

It catalyses the reaction L-histidinol phosphate + 2-oxoglutarate = 3-(imidazol-4-yl)-2-oxopropyl phosphate + L-glutamate. It participates in amino-acid biosynthesis; L-histidine biosynthesis; L-histidine from 5-phospho-alpha-D-ribose 1-diphosphate: step 7/9. This is Histidinol-phosphate aminotransferase from Symbiobacterium thermophilum (strain DSM 24528 / JCM 14929 / IAM 14863 / T).